An 860-amino-acid polypeptide reads, in one-letter code: Translation initiation factor IF-2 (860 aa).

Residues 1 to 11 show a composition bias toward basic and acidic residues; the sequence is MSDTKSGDDKT. The disordered stretch occupies residues 1–265; that stretch reads MSDTKSGDDK…MRRRQEKFKR (265 aa). The segment covering 79–88 has biased composition (low complexity); it reads AAPVVQEAPK. A compositionally biased stretch (basic and acidic residues) spans 110–183; that stretch reads SRSEMEARRR…RRRAEEEARR (74 aa). The tr-type G domain occupies 358–525; that stretch reads PRPPVVTIMG…AILLQAEILD (168 aa). The G1 stretch occupies residues 367–374; sequence GHVDHGKT. Residue 367-374 participates in GTP binding; sequence GHVDHGKT. The G2 stretch occupies residues 392-396; sequence GITQH. A G3 region spans residues 413 to 416; the sequence is DTPG. GTP is bound by residues 413 to 417 and 467 to 470; these read DTPGH and NKID. The G4 stretch occupies residues 467–470; it reads NKID. Residues 503–505 form a G5 region; sequence SAT.

The protein belongs to the TRAFAC class translation factor GTPase superfamily. Classic translation factor GTPase family. IF-2 subfamily.

Its subcellular location is the cytoplasm. One of the essential components for the initiation of protein synthesis. Protects formylmethionyl-tRNA from spontaneous hydrolysis and promotes its binding to the 30S ribosomal subunits. Also involved in the hydrolysis of GTP during the formation of the 70S ribosomal complex. This chain is Translation initiation factor IF-2, found in Mesorhizobium japonicum (strain LMG 29417 / CECT 9101 / MAFF 303099) (Mesorhizobium loti (strain MAFF 303099)).